A 400-amino-acid chain; its full sequence is Phosphoglycerate kinase (400 aa).

Residues Asp24–Asn26, Arg40, His63–Arg66, Arg121, and Arg154 each bind substrate. Residues Lys205, Gly296, Glu327, and Gly356 to Ser359 each bind ATP.

This sequence belongs to the phosphoglycerate kinase family. As to quaternary structure, monomer.

The protein localises to the cytoplasm. The enzyme catalyses (2R)-3-phosphoglycerate + ATP = (2R)-3-phospho-glyceroyl phosphate + ADP. It functions in the pathway carbohydrate degradation; glycolysis; pyruvate from D-glyceraldehyde 3-phosphate: step 2/5. This chain is Phosphoglycerate kinase, found in Thermosynechococcus vestitus (strain NIES-2133 / IAM M-273 / BP-1).